The primary structure comprises 333 residues: DNA-directed RNA polymerase subunit alpha (333 aa).

Positions 1-233 are alpha N-terminal domain (alpha-NTD); sequence MVREKIRVST…DLFIPFLHAE (233 aa). The segment at 267–333 is alpha C-terminal domain (alpha-CTD); sequence KEIALKSIFI…DFLEIEKHFA (67 aa).

It belongs to the RNA polymerase alpha chain family. As to quaternary structure, in plastids the minimal PEP RNA polymerase catalytic core is composed of four subunits: alpha, beta, beta', and beta''. When a (nuclear-encoded) sigma factor is associated with the core the holoenzyme is formed, which can initiate transcription.

The protein resides in the plastid. The protein localises to the chloroplast. The catalysed reaction is RNA(n) + a ribonucleoside 5'-triphosphate = RNA(n+1) + diphosphate. Its function is as follows. DNA-dependent RNA polymerase catalyzes the transcription of DNA into RNA using the four ribonucleoside triphosphates as substrates. The polypeptide is DNA-directed RNA polymerase subunit alpha (Glycine max (Soybean)).